We begin with the raw amino-acid sequence, 396 residues long: Elongation factor Tu (396 aa).

One can recognise a tr-type G domain in the interval 10-206 (KPHVNVGTIG…TLDEYIPEPE (197 aa)). The tract at residues 19–26 (GHVDHGKT) is G1. 19-26 (GHVDHGKT) serves as a coordination point for GTP. Thr26 contributes to the Mg(2+) binding site. Residues 60–64 (GITIA) form a G2 region. The tract at residues 81–84 (DCPG) is G3. GTP is bound by residues 81–85 (DCPGH) and 136–139 (NKAD). The G4 stretch occupies residues 136–139 (NKAD). Positions 174–176 (SAL) are G5.

It belongs to the TRAFAC class translation factor GTPase superfamily. Classic translation factor GTPase family. EF-Tu/EF-1A subfamily. As to quaternary structure, monomer.

Its subcellular location is the cytoplasm. The catalysed reaction is GTP + H2O = GDP + phosphate + H(+). Its function is as follows. GTP hydrolase that promotes the GTP-dependent binding of aminoacyl-tRNA to the A-site of ribosomes during protein biosynthesis. The polypeptide is Elongation factor Tu (Alcanivorax borkumensis (strain ATCC 700651 / DSM 11573 / NCIMB 13689 / SK2)).